A 511-amino-acid chain; its full sequence is Ribose import ATP-binding protein RbsA (511 aa).

2 consecutive ABC transporter domains span residues 9–245 and 261–506; these read FEAK…VGRD and LRAE…LPRR. ATP is bound at residue 41–48; that stretch reads GENGAGKS.

Belongs to the ABC transporter superfamily. Ribose importer (TC 3.A.1.2.1) family. In terms of assembly, the complex is composed of an ATP-binding protein (RbsA), two transmembrane proteins (RbsC) and a solute-binding protein (RbsB).

It localises to the cell inner membrane. The enzyme catalyses D-ribose(out) + ATP + H2O = D-ribose(in) + ADP + phosphate + H(+). Its function is as follows. Part of the ABC transporter complex RbsABC involved in ribose import. Responsible for energy coupling to the transport system. In Rhodopirellula baltica (strain DSM 10527 / NCIMB 13988 / SH1), this protein is Ribose import ATP-binding protein RbsA.